We begin with the raw amino-acid sequence, 61 residues long: Photosystem II reaction center protein K (61 aa).

Residues Met-1–Ala-24 constitute a propeptide that is removed on maturation. The helical transmembrane segment at Met-40–Phe-60 threads the bilayer.

The protein belongs to the PsbK family. PSII is composed of 1 copy each of membrane proteins PsbA, PsbB, PsbC, PsbD, PsbE, PsbF, PsbH, PsbI, PsbJ, PsbK, PsbL, PsbM, PsbT, PsbX, PsbY, PsbZ, Psb30/Ycf12, at least 3 peripheral proteins of the oxygen-evolving complex and a large number of cofactors. It forms dimeric complexes.

It localises to the plastid. Its subcellular location is the chloroplast thylakoid membrane. Functionally, one of the components of the core complex of photosystem II (PSII). PSII is a light-driven water:plastoquinone oxidoreductase that uses light energy to abstract electrons from H(2)O, generating O(2) and a proton gradient subsequently used for ATP formation. It consists of a core antenna complex that captures photons, and an electron transfer chain that converts photonic excitation into a charge separation. The sequence is that of Photosystem II reaction center protein K from Morus indica (Mulberry).